Consider the following 722-residue polypeptide: Mesentericin-Y105 transport/processing ATP-binding protein MesD (722 aa).

The region spanning Q16 to I143 is the Peptidase C39 domain. Residue C22 is part of the active site. The next 8 membrane-spanning stretches (helical) occupy residues L171–S191, L210–A230, L242–F262, T287–V307, T311–M331, S401–T421, L429–L449, and I518–F538. In terms of domain architecture, ABC transmembrane type-1 spans V173–Q455. Residues L489–H722 form the ABC transporter domain. G522–S529 is an ATP binding site.

It belongs to the ABC transporter superfamily.

It is found in the cell membrane. In terms of biological role, involved in the export process of the bacteriocin mesentericin-Y105. This Leuconostoc mesenteroides protein is Mesentericin-Y105 transport/processing ATP-binding protein MesD (mesD).